The following is a 245-amino-acid chain: MIIPAIDLIDGQIVRLYQGDYGQQTTFDLSPQTQLQSYQDQGASWLHIVDLTGAKEPAKRQTALIAKLTAGLNANIQVGGGIRTEEQVAELLSLGVKRVVIGSLAVKEPELVKGWFNKFGSEAICLALDVNINQNGEKIVAVSGWQSGGGKSLESIVEDFSQVGLKHALVTDINRDGTLTGANTALYRELSSHYPHIAWQASGGIATLEDVAAVRDSGAAGIIIGKALLINQFNVAEAIQCWPNE.

D7 functions as the Proton acceptor in the catalytic mechanism. The Proton donor role is filled by D129.

The protein belongs to the HisA/HisF family.

The protein resides in the cytoplasm. The enzyme catalyses 1-(5-phospho-beta-D-ribosyl)-5-[(5-phospho-beta-D-ribosylamino)methylideneamino]imidazole-4-carboxamide = 5-[(5-phospho-1-deoxy-D-ribulos-1-ylimino)methylamino]-1-(5-phospho-beta-D-ribosyl)imidazole-4-carboxamide. It functions in the pathway amino-acid biosynthesis; L-histidine biosynthesis; L-histidine from 5-phospho-alpha-D-ribose 1-diphosphate: step 4/9. This Shewanella sp. (strain ANA-3) protein is 1-(5-phosphoribosyl)-5-[(5-phosphoribosylamino)methylideneamino] imidazole-4-carboxamide isomerase.